Here is a 479-residue protein sequence, read N- to C-terminus: BRAP2 RING ZnF UBP domain-containing protein 2 (479 aa).

The RING-type; atypical zinc finger occupies 167–207 (CPVCLERLDQDTGGILTTMCNHSFHCSCISNWPDSSCPVCR). The UBP-type; degenerate zinc finger occupies 201–294 (SSCPVCRYCQ…GKLVELNSHG (94 aa)). Zn(2+) is bound by residues cysteine 218, cysteine 221, cysteine 230, cysteine 233, cysteine 238, histidine 245, histidine 249, and histidine 255. Positions 328 to 442 (NELLQAQLEN…MAQMDGESEV (115 aa)) form a coiled coil. The segment at 434–479 (AQMDGESEVSETKEVQDATVSTTNTSSSGAGNVIHANKKKSNRRKG) is disordered. Positions 451-466 (ATVSTTNTSSSGAGNV) are enriched in low complexity. The span at 469-479 (ANKKKSNRRKG) shows a compositional bias: basic residues.

Component of the heteromeric E3 ligase complex made of BRIZ1 and BRIZ2. Forms heterooligomers with BRIZ1 via coiled-coil domains.

The enzyme catalyses S-ubiquitinyl-[E2 ubiquitin-conjugating enzyme]-L-cysteine + [acceptor protein]-L-lysine = [E2 ubiquitin-conjugating enzyme]-L-cysteine + N(6)-ubiquitinyl-[acceptor protein]-L-lysine.. Its pathway is protein modification; protein ubiquitination. In terms of biological role, RING-type ubiquitin E3 ligase that binds ubiquitin and is required for seed germination and post-germination growth. In Arabidopsis thaliana (Mouse-ear cress), this protein is BRAP2 RING ZnF UBP domain-containing protein 2.